The primary structure comprises 440 residues: Trigger factor (440 aa).

Residues 163 to 248 (NDTVSINFKG…INSIKEKVLP (86 aa)) form the PPIase FKBP-type domain.

This sequence belongs to the FKBP-type PPIase family. Tig subfamily.

Its subcellular location is the cytoplasm. It catalyses the reaction [protein]-peptidylproline (omega=180) = [protein]-peptidylproline (omega=0). Involved in protein export. Acts as a chaperone by maintaining the newly synthesized protein in an open conformation. Functions as a peptidyl-prolyl cis-trans isomerase. The sequence is that of Trigger factor from Finegoldia magna (strain ATCC 29328 / DSM 20472 / WAL 2508) (Peptostreptococcus magnus).